Here is a 310-residue protein sequence, read N- to C-terminus: Ribonuclease HIII (310 aa).

The RNase H type-2 domain occupies 91–307 (YNCIGSDEAG…REKAQNLVTK (217 aa)). Residues Asp-97, Glu-98, and Asp-202 each coordinate a divalent metal cation.

Belongs to the RNase HII family. RnhC subfamily. It depends on Mn(2+) as a cofactor. Requires Mg(2+) as cofactor.

The protein localises to the cytoplasm. It carries out the reaction Endonucleolytic cleavage to 5'-phosphomonoester.. Its function is as follows. Endonuclease that specifically degrades the RNA of RNA-DNA hybrids. The protein is Ribonuclease HIII of Staphylococcus haemolyticus (strain JCSC1435).